Here is a 1562-residue protein sequence, read N- to C-terminus: Cell surface antigen I/II (1562 aa).

A signal peptide spans 1–38; that stretch reads MKVKKTYGFRKSKISKTLCGAVLGTVAAVSVAGQKVFA. Positions 42-54 are enriched in low complexity; the sequence is TTTSDVDTKVVGT. The disordered stretch occupies residues 42–91; the sequence is TTTSDVDTKVVGTQTGNPATNLPEAQGSASKEAEQSQNQAGETNGSIPVE. Positions 60 to 551 are helical; that stretch reads ATNLPEAQGS…SKAKYDQKIL (492 aa). A compositionally biased stretch (polar residues) spans 76 to 87; that stretch reads QSQNQAGETNGS. 4 Ag I/II A repeats span residues 147-221, 222-303, 304-385, and 386-467; these read KKTT…QKTN, AANQ…QEAN, AANE…KKAN, and AANE…QKDL. Disordered regions lie at residues 824 to 973 and 1482 to 1509; these read VPKV…PTDP and SNTV…RTST. Pro residues predominate over residues 943–958; the sequence is PTPPTPTPDQPEPNKP. The segment covering 1500-1509 has biased composition (low complexity); it reads QDPSSPRTST. Positions 1529-1533 match the LPXTG sorting signal motif; it reads LPNTG. Pentaglycyl murein peptidoglycan amidated threonine is present on T1532. Residues 1533–1562 constitute a propeptide, removed by sortase; that stretch reads GVTNNAYMPLLGIIGLVTSFSLLGLKAKKD.

This sequence belongs to the antigen I/II family. Detected as a 185 kDa cell surface protein, but also as 2 proteins in S.mutans culture supernatants of about 150 kDa (antigen I) and 50 kDa (antigen II); antigen II is only seen after proteolysis. Antigen I and II have the same N-terminus but different C-termini.

The protein localises to the secreted. It is found in the cell wall. Its function is as follows. Surface protein antigen implicated in dental caries. This chain is Cell surface antigen I/II, found in Streptococcus mutans serotype c (strain ATCC 700610 / UA159).